The chain runs to 202 residues: Hypoxanthine-guanine phosphoribosyltransferase (202 aa).

Residues Lys66 and Gly67 each contribute to the diphosphate site. Mg(2+) contacts are provided by Glu122 and Asp123. Asp126 functions as the Proton acceptor in the catalytic mechanism. GMP is bound by residues Lys154, 175 to 176, and Asp182; that span reads FV. A diphosphate-binding site is contributed by Arg188.

Belongs to the purine/pyrimidine phosphoribosyltransferase family. Homodimer and homotetramer in equilibrium. The presence or absence of divalent metal ions, as well as phosphate, can affect the oligomerization state of the enzyme. Likely functions as a tetramer (rather than a dimer) in its biological environment, which is the most active form. The dimeric structure is also active though ~50% of that of the tetramer. The cofactor is Mg(2+).

The protein resides in the cytoplasm. It catalyses the reaction IMP + diphosphate = hypoxanthine + 5-phospho-alpha-D-ribose 1-diphosphate. The enzyme catalyses GMP + diphosphate = guanine + 5-phospho-alpha-D-ribose 1-diphosphate. It functions in the pathway purine metabolism; IMP biosynthesis via salvage pathway; IMP from hypoxanthine: step 1/1. The protein operates within purine metabolism; GMP biosynthesis via salvage pathway; GMP from guanine: step 1/1. Competitively inhibited by acyclic nucleoside phosphonates (ANPs) with Ki values as low as 0.69 uM. Prodrugs of these compounds arrest the growth of a virulent strain of M.tuberculosis with MIC50 values as low as 4.5 uM and possess low cytotoxicity in mammalian cells. Inhibited by pyrrolidine nucleoside bisphosphonates, which are also able to arrest the growth of virulent M.tuberculosis not only in its replicating phase but also in its latent phase, and to arrest the growth of M.tuberculosis in infected macrophages while having low cytotoxicity in mammalian cells. Its function is as follows. Purine salvage pathway enzyme that catalyzes the transfer of the ribosyl-5-phosphate group from 5-phospho-alpha-D-ribose 1-diphosphate (PRPP) to the N9 position of the 6-oxopurines hypoxanthine and guanine to form the corresponding ribonucleotides IMP (inosine 5'-monophosphate) and GMP (guanosine 5'-monophosphate), with the release of PPi. Thus, specifically recycles hypoxanthine and guanine imported from the external medium, and converts them to IMP and GMP, respectively. Cannot use xanthine as substrate. This is Hypoxanthine-guanine phosphoribosyltransferase from Mycobacterium tuberculosis (strain ATCC 25618 / H37Rv).